Reading from the N-terminus, the 467-residue chain is 3-isopropylmalate dehydratase large subunit (467 aa).

C347, C408, and C411 together coordinate [4Fe-4S] cluster.

The protein belongs to the aconitase/IPM isomerase family. LeuC type 1 subfamily. In terms of assembly, heterodimer of LeuC and LeuD. [4Fe-4S] cluster serves as cofactor.

It carries out the reaction (2R,3S)-3-isopropylmalate = (2S)-2-isopropylmalate. The protein operates within amino-acid biosynthesis; L-leucine biosynthesis; L-leucine from 3-methyl-2-oxobutanoate: step 2/4. Functionally, catalyzes the isomerization between 2-isopropylmalate and 3-isopropylmalate, via the formation of 2-isopropylmaleate. The polypeptide is 3-isopropylmalate dehydratase large subunit (Bordetella pertussis (strain Tohama I / ATCC BAA-589 / NCTC 13251)).